We begin with the raw amino-acid sequence, 362 residues long: MNTKKRIFFTGGGTGGHVFPGIAIISKLKELDTNIEFFWLGQKGSMEDNIIKEHEYIKFIAIPSGKLRRYFSLQNFTDVFKVIFGIIKSFFIIKKYKPQIIYATGGFVSSPPIIAASLLRVKSITHEMDLDPGLATKINSKFASKIHISFKESTKYFKNKNVLYTGSPIRKEFSNPNPNIITELTQNTKKPIISIFGGSLGAEVLNKLTLNIKNKIDAYFIHQCGKNLDATRENNYLRSQFFNAEEMASIIKFSNIIISRAGAGAIKEFASAGACVIFIPFVKGSRGDQVRNTKILEEQNACLKIDEENLSESQIIDMIKEILTNKEKFDILKNNIKKFHNQDSSNLIANLLLKDFEDINAS.

UDP-N-acetyl-alpha-D-glucosamine-binding positions include 14-16 (TGG), Arg170, Ser199, and Gln289.

Belongs to the glycosyltransferase 28 family. MurG subfamily.

Its subcellular location is the cell inner membrane. The catalysed reaction is di-trans,octa-cis-undecaprenyl diphospho-N-acetyl-alpha-D-muramoyl-L-alanyl-D-glutamyl-meso-2,6-diaminopimeloyl-D-alanyl-D-alanine + UDP-N-acetyl-alpha-D-glucosamine = di-trans,octa-cis-undecaprenyl diphospho-[N-acetyl-alpha-D-glucosaminyl-(1-&gt;4)]-N-acetyl-alpha-D-muramoyl-L-alanyl-D-glutamyl-meso-2,6-diaminopimeloyl-D-alanyl-D-alanine + UDP + H(+). The protein operates within cell wall biogenesis; peptidoglycan biosynthesis. In terms of biological role, cell wall formation. Catalyzes the transfer of a GlcNAc subunit on undecaprenyl-pyrophosphoryl-MurNAc-pentapeptide (lipid intermediate I) to form undecaprenyl-pyrophosphoryl-MurNAc-(pentapeptide)GlcNAc (lipid intermediate II). The chain is UDP-N-acetylglucosamine--N-acetylmuramyl-(pentapeptide) pyrophosphoryl-undecaprenol N-acetylglucosamine transferase from Borrelia hermsii (strain HS1 / DAH).